We begin with the raw amino-acid sequence, 718 residues long: Origin of replication complex subunit 3 (718 aa).

Over residues 26 to 43 the composition is skewed to low complexity; it reads GAAASSSSSSAPSLPSSG. Positions 26–75 are disordered; sequence GAAASSSSSSAPSLPSSGRARRRIDVSGLASPNPKPGKRSRDDDAAEDDD. A Nuclear localization signal motif is present at residues 659 to 666; that stretch reads IKRKPHTS.

This sequence belongs to the ORC3 family. In terms of assembly, component of the origin recognition complex (ORC) composed of at least ORC1, ORC2, ORC3, ORC4, ORC5 and ORC6. ORC is regulated in a cell-cycle and development dependent manner. It is sequentially assembled at the exit from anaphase of mitosis and disassembled as cells enter S phase. Expressed at low levels in the shoot apical meristem (SAM), leaves, ears and roots (including root tips).

It localises to the nucleus. Component of the origin recognition complex (ORC) that binds origins of replication. DNA-binding is ATP-dependent. The specific DNA sequences that define origins of replication have not been identified yet. The polypeptide is Origin of replication complex subunit 3 (Oryza sativa subsp. japonica (Rice)).